Here is a 600-residue protein sequence, read N- to C-terminus: Aspartate--tRNA(Asp/Asn) ligase (600 aa).

Glutamate 174 is an L-aspartate binding site. An aspartate region spans residues 198–201; the sequence is QLFK. Residue arginine 220 participates in L-aspartate binding. Residues 220–222 and glutamine 229 contribute to the ATP site; that span reads RDE. Histidine 457 contacts L-aspartate. Position 491 (glutamate 491) interacts with ATP. Arginine 498 is a binding site for L-aspartate. Residue 543-546 participates in ATP binding; sequence GLDR.

It belongs to the class-II aminoacyl-tRNA synthetase family. Type 1 subfamily. Homodimer.

The protein localises to the cytoplasm. It catalyses the reaction tRNA(Asx) + L-aspartate + ATP = L-aspartyl-tRNA(Asx) + AMP + diphosphate. In terms of biological role, aspartyl-tRNA synthetase with relaxed tRNA specificity since it is able to aspartylate not only its cognate tRNA(Asp) but also tRNA(Asn). Reaction proceeds in two steps: L-aspartate is first activated by ATP to form Asp-AMP and then transferred to the acceptor end of tRNA(Asp/Asn). This is Aspartate--tRNA(Asp/Asn) ligase from Burkholderia vietnamiensis (strain G4 / LMG 22486) (Burkholderia cepacia (strain R1808)).